The following is a 537-amino-acid chain: ATP-dependent 6-phosphofructokinase 5, chloroplastic (537 aa).

The transit peptide at 1 to 52 directs the protein to the chloroplast; that stretch reads MDALSQAISSGISVPYKNNSSSLVPSHGLTSLILRKSRSPVNPSSRSRVSVR. The interval 35 to 64 is disordered; sequence RKSRSPVNPSSRSRVSVRASEIQHSKTSAS. Residues 39–54 are compositionally biased toward low complexity; that stretch reads SPVNPSSRSRVSVRAS. Residue Ser147 is modified to Phosphoserine. ATP is bound by residues Gly189, 253-254, and 278-281; these read RG and GNGT. Asn279 contributes to the Mg(2+) binding site. Substrate contacts are provided by residues 307-309, 352-354, Glu408, and 460-463; these read TID, MGR, and YMIR. Asp309 functions as the Proton acceptor in the catalytic mechanism.

This sequence belongs to the phosphofructokinase type A (PFKA) family. PPi-dependent PFK group II subfamily. Atypical ATP-dependent clade 'X' sub-subfamily. As to quaternary structure, homotetramer. Mg(2+) is required as a cofactor. In terms of tissue distribution, expressed in roots, leaves, stems and flowers.

Its subcellular location is the plastid. The protein localises to the chloroplast. It carries out the reaction beta-D-fructose 6-phosphate + ATP = beta-D-fructose 1,6-bisphosphate + ADP + H(+). It functions in the pathway carbohydrate degradation; glycolysis; D-glyceraldehyde 3-phosphate and glycerone phosphate from D-glucose: step 3/4. Its activity is regulated as follows. Allosterically activated by AMP. Catalyzes the phosphorylation of D-fructose 6-phosphate to fructose 1,6-bisphosphate by ATP, the first committing step of glycolysis. The protein is ATP-dependent 6-phosphofructokinase 5, chloroplastic of Arabidopsis thaliana (Mouse-ear cress).